We begin with the raw amino-acid sequence, 298 residues long: Protease HtpX homolog (298 aa).

A run of 2 helical transmembrane segments spans residues 14–34 (VVLL…AGYL) and 39–59 (YAMG…SMIF). His-143 is a Zn(2+) binding site. Glu-144 is a catalytic residue. Zn(2+) is bound at residue His-147. 2 helical membrane passes run 158-178 (IAVA…RMLW) and 197-217 (IITL…ASLI). Glu-226 lines the Zn(2+) pocket.

This sequence belongs to the peptidase M48B family. It depends on Zn(2+) as a cofactor.

Its subcellular location is the cell membrane. In Streptococcus pyogenes serotype M49 (strain NZ131), this protein is Protease HtpX homolog.